The following is a 57-amino-acid chain: Conotoxin Cal6.34 (57 aa).

A signal peptide spans Met1–Ala22. 3 disulfide bridges follow: Cys26–Cys37, Cys29–Cys43, and Cys36–Cys54.

It belongs to the conotoxin O1 superfamily. As to expression, expressed by the venom duct.

The protein resides in the secreted. Its function is as follows. Probable neurotoxin. This Californiconus californicus (California cone) protein is Conotoxin Cal6.34.